Consider the following 357-residue polypeptide: Endo-1,4-beta-xylanase Xyn11B (357 aa).

The N-terminal stretch at 1-27 (MKIFQNTKNVIVSIAWAAALCTSAVSA) is a signal peptide. The GH11 domain occupies 29 to 226 (TLTSNSTGTN…SRGSSDITVS (198 aa)). Glu116 functions as the Nucleophile in the catalytic mechanism. Glu213 functions as the Proton donor in the catalytic mechanism. Residues 220–245 (SSDITVSQGGSSGGGNSSSSSSASGG) form a disordered region.

Belongs to the glycosyl hydrolase 11 (cellulase G) family.

It localises to the secreted. The enzyme catalyses Endohydrolysis of (1-&gt;4)-beta-D-xylosidic linkages in xylans.. It functions in the pathway glycan degradation; xylan degradation. Its function is as follows. Endo-acting xylanase which specifically cleaves internal linkages on the xylan backbone, releasing xylooligosaccharides. Is able to hydrolyze glucuronoxylan and the arabinoxylan from wheat. The sequence is that of Endo-1,4-beta-xylanase Xyn11B (xyn11B) from Cellvibrio japonicus (Pseudomonas fluorescens subsp. cellulosa).